We begin with the raw amino-acid sequence, 446 residues long: tRNA modification GTPase MnmE (446 aa).

Residues R28, E85, and K124 each coordinate (6S)-5-formyl-5,6,7,8-tetrahydrofolate. The TrmE-type G domain occupies 220–372 (GLTVVLVGQP…LRAKLLQAAG (153 aa)). A K(+)-binding site is contributed by N230. GTP is bound by residues 230–235 (NVGKSS), 249–255 (TEIAGTT), and 274–277 (DTAG). S234 is a binding site for Mg(2+). Residues T249, I251, and T254 each coordinate K(+). T255 is a binding site for Mg(2+). Residue K446 participates in (6S)-5-formyl-5,6,7,8-tetrahydrofolate binding.

Belongs to the TRAFAC class TrmE-Era-EngA-EngB-Septin-like GTPase superfamily. TrmE GTPase family. In terms of assembly, homodimer. Heterotetramer of two MnmE and two MnmG subunits. It depends on K(+) as a cofactor.

The protein localises to the cytoplasm. Its function is as follows. Exhibits a very high intrinsic GTPase hydrolysis rate. Involved in the addition of a carboxymethylaminomethyl (cmnm) group at the wobble position (U34) of certain tRNAs, forming tRNA-cmnm(5)s(2)U34. The chain is tRNA modification GTPase MnmE from Thiobacillus denitrificans (strain ATCC 25259 / T1).